We begin with the raw amino-acid sequence, 170 residues long: Probable T4-type lysozyme 2 (170 aa).

The active-site Proton donor is glutamate 13. Aspartate 22 functions as the Nucleophile in the catalytic mechanism.

The protein belongs to the glycosyl hydrolase 24 family.

It carries out the reaction Hydrolysis of (1-&gt;4)-beta-linkages between N-acetylmuramic acid and N-acetyl-D-glucosamine residues in a peptidoglycan and between N-acetyl-D-glucosamine residues in chitodextrins.. This Dictyostelium discoideum (Social amoeba) protein is Probable T4-type lysozyme 2.